Reading from the N-terminus, the 365-residue chain is 2-aminoethylphosphonate--pyruvate transaminase (365 aa).

At lysine 194 the chain carries N6-(pyridoxal phosphate)lysine.

The protein belongs to the class-V pyridoxal-phosphate-dependent aminotransferase family. PhnW subfamily. In terms of assembly, homodimer. Pyridoxal 5'-phosphate is required as a cofactor.

It catalyses the reaction (2-aminoethyl)phosphonate + pyruvate = phosphonoacetaldehyde + L-alanine. Its function is as follows. Involved in phosphonate degradation. The protein is 2-aminoethylphosphonate--pyruvate transaminase of Bacillus cereus (strain G9842).